A 1096-amino-acid polypeptide reads, in one-letter code: uncharacterized protein (1096 aa).

The protein belongs to the IIV-6 261R/396L/443R family.

This is an uncharacterized protein from Invertebrate iridescent virus 3 (IIV-3).